We begin with the raw amino-acid sequence, 297 residues long: Ribosomal RNA small subunit methyltransferase H (297 aa).

S-adenosyl-L-methionine is bound by residues 34–36 (AGH), Asp-54, Phe-88, Asp-106, and Gln-113. A disordered region spans residues 272–297 (PLTAGEEETDRNPRARSAKLRAAEKK).

This sequence belongs to the methyltransferase superfamily. RsmH family.

The protein resides in the cytoplasm. It catalyses the reaction cytidine(1402) in 16S rRNA + S-adenosyl-L-methionine = N(4)-methylcytidine(1402) in 16S rRNA + S-adenosyl-L-homocysteine + H(+). Specifically methylates the N4 position of cytidine in position 1402 (C1402) of 16S rRNA. This Acidobacterium capsulatum (strain ATCC 51196 / DSM 11244 / BCRC 80197 / JCM 7670 / NBRC 15755 / NCIMB 13165 / 161) protein is Ribosomal RNA small subunit methyltransferase H.